We begin with the raw amino-acid sequence, 522 residues long: Glutamyl-tRNA(Gln) amidotransferase subunit A (522 aa).

Active-site charge relay system residues include Lys-88 and Ser-163. Catalysis depends on Ser-187, which acts as the Acyl-ester intermediate.

The protein belongs to the amidase family. GatA subfamily. Heterotrimer of A, B and C subunits.

The enzyme catalyses L-glutamyl-tRNA(Gln) + L-glutamine + ATP + H2O = L-glutaminyl-tRNA(Gln) + L-glutamate + ADP + phosphate + H(+). Allows the formation of correctly charged Gln-tRNA(Gln) through the transamidation of misacylated Glu-tRNA(Gln) in organisms which lack glutaminyl-tRNA synthetase. The reaction takes place in the presence of glutamine and ATP through an activated gamma-phospho-Glu-tRNA(Gln). In Paenarthrobacter aurescens (strain TC1), this protein is Glutamyl-tRNA(Gln) amidotransferase subunit A.